The primary structure comprises 326 residues: BTB/POZ domain-containing protein At1g21780 (326 aa).

A BTB domain is found at 161 to 228 (TDVIIHTADG…LYGNITQEEF (68 aa)).

Homodimer. Interacts with CUL3A and CUL3B.

Its pathway is protein modification; protein ubiquitination. Its function is as follows. May act as a substrate-specific adapter of an E3 ubiquitin-protein ligase complex (CUL3-RBX1-BTB) which mediates the ubiquitination and subsequent proteasomal degradation of target proteins. This Arabidopsis thaliana (Mouse-ear cress) protein is BTB/POZ domain-containing protein At1g21780.